Here is a 647-residue protein sequence, read N- to C-terminus: Leucine-rich repeat and WD repeat-containing protein 1 (647 aa).

LRR repeat units lie at residues 22–43, 48–69, 70–91, and 92–113; these read KIRS…PKLL, QLQE…LGLS, HLRV…CQFP, and KLEE…LKVS. Residues 204 to 267 are disordered; the sequence is RTQVQKANSP…GSPVAGSDGS (64 aa). Phosphoserine is present on residues serine 212, serine 243, serine 251, serine 259, and serine 264. WD repeat units lie at residues 282–335, 341–379, 383–422, 426–472, 484–526, 542–582, and 598–646; these read HSKN…LHKY, EFFS…LLHV, FCCG…LWDI, NQDY…CWDV, EVEF…LWSW, VVLA…LYDV, and APTQ…IWGR.

This sequence belongs to the LRWD1 family. In terms of assembly, integral component of the ORC complex. Directly interacts with CDT1, GMNN and ORC2. Interacts with ORC2 only when non-ubiquitinated; this interaction prevents LRWD1 ubiquitination and degradation. Some of these interactions are regulated in a cell-cycle dependent manner. Interaction with ORC1 occurs predominantly during G1. Association with phosphorylated ORC1 during mitosis is not efficient. Interaction with CDT1 occurs during G1 phase, as well as during mitosis with phosphorylated CDT1. Interaction with GMNN occurs from G1/S to mitosis. Interaction with ORC2 is observed throughout the cell cycle. The stoichiometry of the ORCA/ORC/CDT1/GMNN complex is 1:1:1:2. Interacts with CUL4A and DDB1; this interaction may lead to ubiquitination. Post-translationally, ubiquitinated; undergoes 'Lys-48'-linked polyubiquitination leading to proteasomal degradation. Ubiquitination occurs within the WD repeats at the end of the G1 phase. Ubiquitination may be catalyzed by the CUL4-DDB1 E3 ubiquitin-protein ligase complex and other E3 ligases. Testis-specific. Drastically down-regulated in testis from patients with Sertoli cell-only syndrome (SCOS).

The protein localises to the nucleus. The protein resides in the chromosome. Its subcellular location is the centromere. It is found in the telomere. It localises to the cytoplasm. The protein localises to the cytoskeleton. The protein resides in the microtubule organizing center. Its subcellular location is the centrosome. It is found in the kinetochore. In terms of biological role, required for G1/S transition. Recruits and stabilizes the origin recognition complex (ORC) onto chromatin during G1 to establish pre-replication complex (preRC) and to heterochromatic sites in post-replicated cells. Binds a combination of DNA and histone methylation repressive marks on heterochromatin. Binds histone H3 and H4 trimethylation marks H3K9me3, H3K27me3 and H4K20me3 in a cooperative manner with DNA methylation. Required for silencing of major satellite repeats. May be important ORC2, ORC3 and ORC4 stability. In Homo sapiens (Human), this protein is Leucine-rich repeat and WD repeat-containing protein 1 (LRWD1).